Reading from the N-terminus, the 238-residue chain is Thrombin-like enzyme collinein-1 (238 aa).

The region spanning 1–229 (VIGGDECNIN…HLDWIQNIIA (229 aa)) is the Peptidase S1 domain. 6 disulfides stabilise this stretch: C7/C141, C28/C44, C78/C236, C120/C190, C152/C169, and C180/C205. Catalysis depends on charge relay system residues H43 and D88. The active-site Charge relay system is the S184.

This sequence belongs to the peptidase S1 family. Snake venom subfamily. Monomer. Expressed by the venom gland.

Its subcellular location is the secreted. With respect to regulation, inhibited by Cu(2+) and, to a lesser extent, by Zn(2+) and Ba(2+). Not inhibited by Ca(2+) and Mg(2+). Functionally, thrombin-like snake venom serine protease. Releases fibrinopeptide A and B in the conversion of fibrinogen to fibrin, with preferential activity on the alpha chain of fibrinogen. Also hydrolyzes N-p-toluensulfonyl arginine ester (TAME) and chromogenic artificial substrates of the blood coagulation cascade: S-2222 for factor Xa, S-2302 for kallikrein and S-2238 for thrombin. When tested in vitro, the recombinant protein does not degrade blood clots, suggesting that this toxin lacks fibrinolytic activity. In addition, it moderately inhibits human Kv10.1/KCNH1/EAG1 currents, with a mechanism independent of its enzymatic activity. It selectively blocks Kv10.1/KCNH1/EAG1 in a time and dose-dependent manner (IC(50)=4.2 uM for native protein and IC(50)=2.5 uM for recombinant protein). It may have a preference in interacting with Kv10.1/KCNH1/EAG1 in its closed state, since the inhibitory effect of the toxin is decreased at more depolarized potentials. Corroboratively, it may have possible antitumor applications, since it reduces the viability of human breast cancer cell line MCF-7, which strongly expresses Kv10.1/KCNH1/EAG1, but does not affect the liver carcinoma and the non-tumorigenic epithelial breast cell lines, which weakly express Kv10.1/KCNH1/EAG1. When tested on peripheral blood mononuclear cells (PBMC), the native protein shows mild cytotoxicity, whereas the recombinant protein does not show any cytotoxicity. Native form is not immununogenic, since it does not induce statistically significant antibody production in mice, whereas recombinant form shows an antibody titer slightly higher than the native form. In vivo, subplantar injection in mice paw induces a discreet paw edema. In addition, intraperitoneal injection of the recombinant protein into mice led to fibrinogen depletion, resulting in the blood incoagulability. This chain is Thrombin-like enzyme collinein-1, found in Crotalus durissus collilineatus (Brazilian rattlesnake).